The following is a 437-amino-acid chain: Septin-7 (437 aa).

Serine 2 carries the post-translational modification N-acetylserine. Tyrosine 30 carries the post-translational modification Phosphotyrosine. Residues 47–316 form the Septin-type G domain; the sequence is RGFEFTLMVV…ENYRSRKLAA (270 aa). The interval 47 to 317 is interaction with SEPTIN12; it reads RGFEFTLMVV…NYRSRKLAAV (271 aa). The G1 motif stretch occupies residues 57–64; sequence GESGLGKS. 57–64 contributes to the GTP binding site; sequence GESGLGKS. A Phosphoserine modification is found at serine 77. GTP is bound by residues threonine 90, glycine 116, and 195–203; that span reads KADTLTPEE. A G3 motif region spans residues 113-116; it reads DTPG. The G4 motif stretch occupies residues 194-197; that stretch reads AKAD. Threonine 228 is subject to Phosphothreonine. GTP-binding residues include glycine 250 and arginine 265. Residues 332-433 adopt a coiled-coil conformation; it reads TKSPLAQMEE…SRTLEKNKKK (102 aa). The residue at position 334 (serine 334) is a Phosphoserine. The residue at position 373 (lysine 373) is an N6-acetyllysine. Over residues 378 to 410 the composition is skewed to basic and acidic residues; that stretch reads ELQRRHEQMKKNLEAQHKELEEKRRQFEDEKAN. The tract at residues 378–437 is disordered; the sequence is ELQRRHEQMKKNLEAQHKELEEKRRQFEDEKANWEAQQRILEQQNSSRTLEKNKKKGKIF. Phosphoserine is present on serine 424. Position 426 is a phosphothreonine (threonine 426).

The protein belongs to the TRAFAC class TrmE-Era-EngA-EngB-Septin-like GTPase superfamily. Septin GTPase family. As to quaternary structure, septins polymerize into heterooligomeric protein complexes that form filaments, and associate with cellular membranes, actin filaments and microtubules. GTPase activity is required for filament formation. Filaments are assembled from asymmetrical heterotrimers, composed of SEPTIN2, SEPTIN6 and SEPTIN7 that associate head-to-head to form a hexameric unit. Within the trimer, directly interacts with SEPTIN6, while interaction with SEPTIN2 seems indirect. In the absence of SEPTIN6, forms homodimers. Interacts directly with CENPE and links CENPE to septin filaments composed of SEPTIN2, SEPTIN6 and SEPTIN7. Interacts with SEPTIN5, SEPTIN8, SEPTIN9 and SEPTIN11. Component of a septin core octameric complex consisting of SEPTIN12, SEPTIN7, SEPTIN6 and SEPTIN2 or SEPTIN4 in the order 12-7-6-2-2-6-7-12 or 12-7-6-4-4-6-7-12 and located in the sperm annulus; the SEPTIN12:SEPTIN7 association is mediated by the respective GTP-binding domains.

The protein localises to the cytoplasm. Its subcellular location is the chromosome. It is found in the centromere. The protein resides in the kinetochore. It localises to the cytoskeleton. The protein localises to the spindle. Its subcellular location is the cleavage furrow. It is found in the midbody. The protein resides in the cilium axoneme. It localises to the cell projection. The protein localises to the cilium. Its subcellular location is the flagellum. In terms of biological role, filament-forming cytoskeletal GTPase. Required for normal organization of the actin cytoskeleton. Required for normal progress through mitosis. Involved in cytokinesis. Required for normal association of CENPE with the kinetochore. Plays a role in ciliogenesis and collective cell movements. Forms a filamentous structure with SEPTIN12, SEPTIN6, SEPTIN2 and probably SEPTIN4 at the sperm annulus which is required for the structural integrity and motility of the sperm tail during postmeiotic differentiation. The sequence is that of Septin-7 from Bos taurus (Bovine).